The following is a 145-amino-acid chain: Putative pre-16S rRNA nuclease (145 aa).

It belongs to the YqgF nuclease family.

The protein localises to the cytoplasm. Could be a nuclease involved in processing of the 5'-end of pre-16S rRNA. This Tropheryma whipplei (strain Twist) (Whipple's bacillus) protein is Putative pre-16S rRNA nuclease.